A 403-amino-acid chain; its full sequence is Argininosuccinate synthase (403 aa).

10 to 18 (AYSGGLDTS) provides a ligand contact to ATP. Residue Tyr-87 participates in L-citrulline binding. Gly-117 provides a ligand contact to ATP. 3 residues coordinate L-aspartate: Thr-119, Asn-123, and Asp-124. Asn-123 is a binding site for L-citrulline. L-citrulline is bound by residues Arg-127, Ser-175, Glu-260, and Tyr-272.

This sequence belongs to the argininosuccinate synthase family. Type 1 subfamily. Homotetramer.

Its subcellular location is the cytoplasm. The enzyme catalyses L-citrulline + L-aspartate + ATP = 2-(N(omega)-L-arginino)succinate + AMP + diphosphate + H(+). The protein operates within amino-acid biosynthesis; L-arginine biosynthesis; L-arginine from L-ornithine and carbamoyl phosphate: step 2/3. The sequence is that of Argininosuccinate synthase from Bacillus velezensis (strain DSM 23117 / BGSC 10A6 / LMG 26770 / FZB42) (Bacillus amyloliquefaciens subsp. plantarum).